Here is a 570-residue protein sequence, read N- to C-terminus: D-xylulose kinase A (570 aa).

Residues His-95, Arg-166, Asp-282, and Asn-283 each contribute to the substrate site. ATP is bound by residues Trp-364, 469–470, and Asn-473; that span reads GG.

The protein belongs to the FGGY kinase family.

Its subcellular location is the cytoplasm. The enzyme catalyses D-xylulose + ATP = D-xylulose 5-phosphate + ADP + H(+). In terms of biological role, highly specific D-xylulose kinase which participates in the catabolism of xylose. Xylose is a major component of hemicelluloses such as xylan. Most fungi utilize D-xylose via three enzymatic reactions, xylose reductase (XR), xylitol dehydrogenase (XDH), and xylulokinase, to form xylulose 5-phosphate, which enters pentose phosphate pathway. The protein is D-xylulose kinase A (xkiA) of Aspergillus niger.